Here is a 260-residue protein sequence, read N- to C-terminus: Protein FAM220A (260 aa).

Disordered stretches follow at residues 1-75 and 129-158; these read MKAG…SKAS and GSDW…GRPG. The segment covering 35 to 47 has biased composition (polar residues); it reads RNPSPSVVPSWTD.

Interacts with transcriptional activator STAT3; the interaction occurs in both the nucleus and the cytoplasm, is enhanced by IL6 and promotes STAT3 dephosphorylation, leading to negative regulation of STAT3 transcriptional activator activity. Can interact with both unphosphorylated and phosphorylated STAT3 but interacts preferentially with phosphorylated STAT3 in the nucleus. Interacts with protein phosphatase PTPN2/TC45; this promotes interaction of PTPN2 with STAT3, leading to dephosphorylation of STAT3 by PTPN2. As to expression, expressed at high levels in the testis where it is detected within elongated spermatids during the late stages (steps 9-16) of haploid germ cell development and in the tubular lumen (at protein level).

Its subcellular location is the nucleus. The protein resides in the cytoplasm. The protein localises to the cytoplasmic vesicle. It is found in the secretory vesicle. It localises to the acrosome. In terms of biological role, promotes dephosphorylation of transcriptional activator STAT3 by interacting with both STAT3 and protein phosphatase PTPN2. This promotes interaction of PTPN2 with STAT3 and mediates STAT3 dephosphorylation by PTPN2, leading to negative regulation of STAT3 transcriptional activator activity. May be required for spermiogenesis or sperm function. The sequence is that of Protein FAM220A from Mus musculus (Mouse).